Consider the following 362-residue polypeptide: MITLDLTLPDCRYPIHIGQGVLDRAGELVAPHLPQSRALIVTNDVVAPLYLERCRQSLQAAGVCTEVVILPDGEAHKDWQTLNCIFDALIAMRAERKTALVALGGGVIGDMTGFAAACWQRGAPFVQIPTTLLAQVDSSVGGKTAINHPAGKNMIGAFWQPRVVLADLDVLDTLPEREFSAGLAEVYKYGLIDNLPFFEWCEQQVPALLARDKAALAHAVEVSCRMKAAIVGQDEKEQGVRALLNLGHTFGHAIEAGLGFGVWLHGEAVAAGMVLAAETAQEMGQLESADVLRIRALLLQSNLPVVPPAWPLATWLELMGHDKKVEGGQLRFVLPDRLGHCRLESGVGEKYLEKVLIHNIRD.

NAD(+) contacts are provided by residues 72–77, 106–110, 130–131, Lys143, and Lys152; these read DGEAHK, GVIGD, and TT. Residues Glu185, His248, and His265 each coordinate Zn(2+).

It belongs to the sugar phosphate cyclases superfamily. Dehydroquinate synthase family. The cofactor is Co(2+). Requires Zn(2+) as cofactor. NAD(+) serves as cofactor.

The protein resides in the cytoplasm. The catalysed reaction is 7-phospho-2-dehydro-3-deoxy-D-arabino-heptonate = 3-dehydroquinate + phosphate. The protein operates within metabolic intermediate biosynthesis; chorismate biosynthesis; chorismate from D-erythrose 4-phosphate and phosphoenolpyruvate: step 2/7. Functionally, catalyzes the conversion of 3-deoxy-D-arabino-heptulosonate 7-phosphate (DAHP) to dehydroquinate (DHQ). The polypeptide is 3-dehydroquinate synthase (Laribacter hongkongensis (strain HLHK9)).